The following is a 170-amino-acid chain: NADH-quinone oxidoreductase subunit B (170 aa).

4 residues coordinate [4Fe-4S] cluster: cysteine 37, cysteine 38, cysteine 102, and cysteine 131.

It belongs to the complex I 20 kDa subunit family. In terms of assembly, NDH-1 is composed of 14 different subunits. Subunits NuoB, C, D, E, F, and G constitute the peripheral sector of the complex. It depends on [4Fe-4S] cluster as a cofactor.

It is found in the cell inner membrane. The enzyme catalyses a quinone + NADH + 5 H(+)(in) = a quinol + NAD(+) + 4 H(+)(out). NDH-1 shuttles electrons from NADH, via FMN and iron-sulfur (Fe-S) centers, to quinones in the respiratory chain. The immediate electron acceptor for the enzyme in this species is believed to be ubiquinone. Couples the redox reaction to proton translocation (for every two electrons transferred, four hydrogen ions are translocated across the cytoplasmic membrane), and thus conserves the redox energy in a proton gradient. In Geobacter sulfurreducens (strain ATCC 51573 / DSM 12127 / PCA), this protein is NADH-quinone oxidoreductase subunit B.